The chain runs to 510 residues: Glycosyl hydrolase YngK (510 aa).

Positions 1–30 are cleaved as a signal peptide; it reads MKVCQKSIVRFLVSLIIGTFVISVPFMANA.

Belongs to the glycosyl hydrolase-like 10 (GHL10) family.

The chain is Glycosyl hydrolase YngK (yngK) from Bacillus subtilis (strain 168).